The following is a 279-amino-acid chain: Formamidopyrimidine-DNA glycosylase (279 aa).

Pro-2 acts as the Schiff-base intermediate with DNA in catalysis. The Proton donor role is filled by Glu-3. Lys-57 functions as the Proton donor; for beta-elimination activity in the catalytic mechanism. Positions 90, 109, and 151 each coordinate DNA. The segment at 236 to 270 (FVYGRTGQPCRVCQTPIAVLRLGQRSTFYCPACQQ) adopts an FPG-type zinc-finger fold. Arg-260 acts as the Proton donor; for delta-elimination activity in catalysis.

Belongs to the FPG family. In terms of assembly, monomer. The cofactor is Zn(2+).

It catalyses the reaction Hydrolysis of DNA containing ring-opened 7-methylguanine residues, releasing 2,6-diamino-4-hydroxy-5-(N-methyl)formamidopyrimidine.. It carries out the reaction 2'-deoxyribonucleotide-(2'-deoxyribose 5'-phosphate)-2'-deoxyribonucleotide-DNA = a 3'-end 2'-deoxyribonucleotide-(2,3-dehydro-2,3-deoxyribose 5'-phosphate)-DNA + a 5'-end 5'-phospho-2'-deoxyribonucleoside-DNA + H(+). Its function is as follows. Involved in base excision repair of DNA damaged by oxidation or by mutagenic agents. Acts as a DNA glycosylase that recognizes and removes damaged bases. Has a preference for oxidized purines, such as 7,8-dihydro-8-oxoguanine (8-oxoG). Has AP (apurinic/apyrimidinic) lyase activity and introduces nicks in the DNA strand. Cleaves the DNA backbone by beta-delta elimination to generate a single-strand break at the site of the removed base with both 3'- and 5'-phosphates. The chain is Formamidopyrimidine-DNA glycosylase from Methylobacillus flagellatus (strain ATCC 51484 / DSM 6875 / VKM B-1610 / KT).